We begin with the raw amino-acid sequence, 96 residues long: Small ribosomal subunit protein bS6 (96 aa).

This sequence belongs to the bacterial ribosomal protein bS6 family.

Functionally, binds together with bS18 to 16S ribosomal RNA. The chain is Small ribosomal subunit protein bS6 (rpsF) from Streptomyces coelicolor (strain ATCC BAA-471 / A3(2) / M145).